A 117-amino-acid chain; its full sequence is MPRVKRGVQARARHKKVLKQAKGYYGARSRVYRVAFQAVTKAGQYAYRDRRNKKRQFRQLWIARINAASRQNGLSYSRFINGLKKASIEIDRKILADIAVFDKAAFAVLVEKAKASL.

It belongs to the bacterial ribosomal protein bL20 family.

Its function is as follows. Binds directly to 23S ribosomal RNA and is necessary for the in vitro assembly process of the 50S ribosomal subunit. It is not involved in the protein synthesizing functions of that subunit. The chain is Large ribosomal subunit protein bL20 from Vibrio atlanticus (strain LGP32) (Vibrio splendidus (strain Mel32)).